We begin with the raw amino-acid sequence, 122 residues long: Large ribosomal subunit protein eL18 (122 aa).

This sequence belongs to the eukaryotic ribosomal protein eL18 family.

In Picrophilus torridus (strain ATCC 700027 / DSM 9790 / JCM 10055 / NBRC 100828 / KAW 2/3), this protein is Large ribosomal subunit protein eL18.